A 124-amino-acid chain; its full sequence is Protein archease (124 aa).

His7, Asp10, Asp123, and Thr124 together coordinate Ca(2+).

Belongs to the archease family.

Activates the tRNA-splicing ligase complex by facilitating the enzymatic turnover of catalytic subunit RtcB. Acts by promoting the guanylylation of RtcB, a key intermediate step in tRNA ligation. Can also alter the NTP specificity of RtcB such that ATP, dGTP or ITP is used efficiently. May also act as a chaperone or modulator of proteins involved in DNA or RNA processing. This Thermotoga maritima (strain ATCC 43589 / DSM 3109 / JCM 10099 / NBRC 100826 / MSB8) protein is Protein archease.